A 75-amino-acid chain; its full sequence is Exodeoxyribonuclease 7 small subunit (75 aa).

This sequence belongs to the XseB family. As to quaternary structure, heterooligomer composed of large and small subunits.

It is found in the cytoplasm. The catalysed reaction is Exonucleolytic cleavage in either 5'- to 3'- or 3'- to 5'-direction to yield nucleoside 5'-phosphates.. Bidirectionally degrades single-stranded DNA into large acid-insoluble oligonucleotides, which are then degraded further into small acid-soluble oligonucleotides. In Nostoc punctiforme (strain ATCC 29133 / PCC 73102), this protein is Exodeoxyribonuclease 7 small subunit.